The following is a 52-amino-acid chain: Ovomucoid (52 aa).

The region spanning valine 2–cysteine 52 is the Kazal-like domain. Cystine bridges form between cysteine 4/cysteine 34, cysteine 12/cysteine 31, and cysteine 20/cysteine 52. An N-linked (GlcNAc...) asparagine glycan is attached at asparagine 41.

Its subcellular location is the secreted. This chain is Ovomucoid, found in Scythrops novaehollandiae (Channel-billed cuckoo).